A 294-amino-acid polypeptide reads, in one-letter code: Homoserine kinase (294 aa).

An ATP-binding site is contributed by 83–93 (PLARGLGSSAS).

The protein belongs to the GHMP kinase family. Homoserine kinase subfamily.

The protein resides in the cytoplasm. It catalyses the reaction L-homoserine + ATP = O-phospho-L-homoserine + ADP + H(+). Its pathway is amino-acid biosynthesis; L-threonine biosynthesis; L-threonine from L-aspartate: step 4/5. Functionally, catalyzes the ATP-dependent phosphorylation of L-homoserine to L-homoserine phosphate. The polypeptide is Homoserine kinase (Oceanobacillus iheyensis (strain DSM 14371 / CIP 107618 / JCM 11309 / KCTC 3954 / HTE831)).